Reading from the N-terminus, the 614-residue chain is Vitamin B12 transporter BtuB (614 aa).

Positions 1–20 (MIKKATLLTAFSVTAFSAWA) are cleaved as a signal peptide. Residues 26–33 (DTLVVTAN) carry the TonB box motif. Residues 38–152 (PRSAVLAPVT…IGGVVNIITT (115 aa)) form the TBDR plug domain. Residues S85, N92, and 110–111 (VS) each bind cyanocob(III)alamin. Residues 155 to 614 (NPGTELTAGW…EYTLSGSYTF (460 aa)) enclose the TBDR beta-barrel domain. 3 consecutive transmembrane segments (beta stranded) span residues 158–165 (TELTAGWG), 169–178 (YQNYDISTQQ), and 184–195 (TRATLIGDYEYT). Ca(2+) is bound by residues D199, Q211, D213, and D215. 2 beta stranded membrane-spanning segments follow: residues 217 to 227 (FLSKTLYGALE) and 232 to 248 (DRWS…NRTD). 2 residues coordinate Ca(2+): Y249 and D250. A251 provides a ligand contact to cyanocob(III)alamin. Position 261 (D261) interacts with Ca(2+). 14 beta stranded membrane passes run 263-277 (RKLY…LRFN), 279-296 (ERIQ…KDYN), 309-325 (TLDE…NSVV), 328-337 (HGNVGAGVDW), 353-369 (YDQR…QQLG), 371-381 (FTLEAAARSDD), 385-400 (FGRH…WEFI), 403-417 (YRFI…KAPN), 434-443 (KSKQWEGAFE), 449-458 (VSWRISGYRN), 473-490 (YYNE…TANF), 494-509 (PLTH…ARNA), 517-529 (RRSK…QLDW), and 535-550 (DWGV…YDSD). T309 is a binding site for cyanocob(III)alamin. R517 contacts cyanocob(III)alamin. Y551 provides a ligand contact to cyanocob(III)alamin. The next 3 beta stranded transmembrane spans lie at 558-572 (TVKM…LTVA), 585-596 (IANLFDKDYETV), and 602-614 (AGRE…SYTF). The TonB C-terminal box signature appears at 597–614 (YGYQTAGREYTLSGSYTF).

Belongs to the TonB-dependent receptor family. BtuB (TC 1.B.14.3.1) subfamily.

Its subcellular location is the cell outer membrane. Involved in the active translocation of vitamin B12 (cyanocobalamin) across the outer membrane to the periplasmic space. It derives its energy for transport by interacting with the trans-periplasmic membrane protein TonB. This chain is Vitamin B12 transporter BtuB, found in Salmonella choleraesuis (strain SC-B67).